Here is a 314-residue protein sequence, read N- to C-terminus: Deoxymugineic acid synthase 1-A (314 aa).

Residues 1-21 are disordered; that stretch reads MGAGDKTAAGMPRIGMGTAVQ. Asp-44 serves as a coordination point for NADP(+). The active-site Proton donor is Tyr-49. His-112 lines the substrate pocket. Residues 158–159, Gln-180, 258–266, and 273–281 each bind NADP(+); these read AN, FDEARMREN, and ELTEEEHRR.

It belongs to the aldo/keto reductase family. As to expression, mostly expressed in root tissues, observed in mesocotyl and embryonic roots, seedling roots, crown and seedling leafes, mature bracts, anthers, pistil, caryopsis and embryos.

It carries out the reaction 2'-deoxymugineate + NAD(+) = 3''-deamino-3''-oxonicotianamine + NADH + H(+). The enzyme catalyses 2'-deoxymugineate + NADP(+) = 3''-deamino-3''-oxonicotianamine + NADPH + H(+). The protein operates within siderophore biosynthesis. In terms of biological role, catalyzes the reduction of a 3''-keto intermediate during the biosynthesis of 2'-deoxymugineic acid (DMA) from L-Met. Involved in the formation of phytosiderophores (MAs) belonging to the mugineic acid family and required to acquire iron. This Triticum aestivum (Wheat) protein is Deoxymugineic acid synthase 1-A.